A 70-amino-acid chain; its full sequence is Large ribosomal subunit protein bL31 (70 aa).

Zn(2+) is bound by residues Cys16, Cys18, Cys37, and Cys40.

The protein belongs to the bacterial ribosomal protein bL31 family. Type A subfamily. Part of the 50S ribosomal subunit. The cofactor is Zn(2+).

Functionally, binds the 23S rRNA. The chain is Large ribosomal subunit protein bL31 from Saccharophagus degradans (strain 2-40 / ATCC 43961 / DSM 17024).